Reading from the N-terminus, the 259-residue chain is Probable ABC transporter permease protein RC0129 (259 aa).

The next 5 helical transmembrane spans lie at T13–I35, L49–V69, V148–M168, P195–I215, and A237–F257.

The protein belongs to the MlaE permease family.

It is found in the cell inner membrane. Its function is as follows. Could be part of an ABC transporter complex. This Rickettsia conorii (strain ATCC VR-613 / Malish 7) protein is Probable ABC transporter permease protein RC0129.